The sequence spans 233 residues: Beta-fibrinogenase brevinase (233 aa).

The 224-residue stretch at 1 to 224 folds into the Peptidase S1 domain; it reads VIGGDECNIN…YIDWIQSIIA (224 aa). Intrachain disulfides connect Cys-7-Cys-138, Cys-25-Cys-41, Cys-73-Cys-231, Cys-117-Cys-185, Cys-149-Cys-164, and Cys-175-Cys-200. The active-site Charge relay system is His-40. Residue Asn-54 is glycosylated (N-linked (GlcNAc...) asparagine). The Charge relay system role is filled by Asp-85. N-linked (GlcNAc...) asparagine glycosylation occurs at Asn-129. The short motif at 176–178 is the Cell attachment site element; sequence RGD. Ser-179 serves as the catalytic Charge relay system. N-linked (GlcNAc...) asparagine glycosylation is present at Asn-226.

It belongs to the peptidase S1 family. Snake venom subfamily. As to quaternary structure, heterodimer of the brevinase A chain and the brevinase B chain. In terms of tissue distribution, expressed by the venom gland.

It localises to the secreted. Its activity is regulated as follows. The fibrinolytic activity is completely inhibited by PMSF, diisopropylfluorophosphate (DFP), pefabloc, dithiothreitol (DTT) and Zn(2+), but not by Pepstatin A, E64, iodoacetate, chymostatin, tosyl-Lphenylalanine chloromethyl ketone (TPCK), soybean trypsin inhibitor (SBTI), phosphoramidon, Ca(2+), Co(2+), Cu(2+), Fe(2+), Mg(2+), Mn(2+), K(+), and Na(+). Its function is as follows. Snake venom serine protease that has fibrinogenolytic activities. Preferentially cleaves the Bbeta-chain (FGB) and more slowly the Aa-chain (FGA) of fibrinogen, but does not affect the gamma-chain. Also has fibrinolytic activity. May play a role in antithrombotic reaction as well as thrombolytic reaction. In Gloydius blomhoffii (Mamushi), this protein is Beta-fibrinogenase brevinase.